We begin with the raw amino-acid sequence, 93 residues long: Small ribosomal subunit protein uS19 (93 aa).

The protein belongs to the universal ribosomal protein uS19 family.

Functionally, protein S19 forms a complex with S13 that binds strongly to the 16S ribosomal RNA. This is Small ribosomal subunit protein uS19 from Campylobacter fetus subsp. fetus (strain 82-40).